The sequence spans 279 residues: 32 kDa beta-galactoside-binding lectin (279 aa).

Galectin domains follow at residues 13 to 144 and 152 to 279; these read YRSV…VHWG and YESG…IQIQ. 213–219 contributes to the a beta-D-galactoside binding site; it reads WGNEERE.

In terms of processing, the N-terminus is blocked.

Its function is as follows. Binds galactose. The protein is 32 kDa beta-galactoside-binding lectin (lec-1) of Caenorhabditis elegans.